Here is a 234-residue protein sequence, read N- to C-terminus: ATP-dependent dethiobiotin synthetase BioD (234 aa).

12-17 (DVGKTF) serves as a coordination point for ATP. Residue Thr16 coordinates Mg(2+). The active site involves Lys37. Thr41 lines the substrate pocket. ATP contacts are provided by residues Asp54 and 115 to 118 (EGAG). Mg(2+) contacts are provided by Asp54 and Glu115.

Belongs to the dethiobiotin synthetase family. Homodimer. It depends on Mg(2+) as a cofactor.

The protein resides in the cytoplasm. It catalyses the reaction (7R,8S)-7,8-diammoniononanoate + CO2 + ATP = (4R,5S)-dethiobiotin + ADP + phosphate + 3 H(+). Its pathway is cofactor biosynthesis; biotin biosynthesis; biotin from 7,8-diaminononanoate: step 1/2. Functionally, catalyzes a mechanistically unusual reaction, the ATP-dependent insertion of CO2 between the N7 and N8 nitrogen atoms of 7,8-diaminopelargonic acid (DAPA, also called 7,8-diammoniononanoate) to form a ureido ring. This Lysinibacillus sphaericus (Bacillus sphaericus) protein is ATP-dependent dethiobiotin synthetase BioD.